Here is a 306-residue protein sequence, read N- to C-terminus: Putative S-adenosyl-L-methionine-dependent methyltransferase FRAAL5401 (306 aa).

Residues Asp-126 and 155 to 156 (DL) each bind S-adenosyl-L-methionine. The interval 201-225 (LSAPESRVATENRPNPKPGDEDRTK) is disordered.

Belongs to the UPF0677 family.

In terms of biological role, exhibits S-adenosyl-L-methionine-dependent methyltransferase activity. In Frankia alni (strain DSM 45986 / CECT 9034 / ACN14a), this protein is Putative S-adenosyl-L-methionine-dependent methyltransferase FRAAL5401.